We begin with the raw amino-acid sequence, 215 residues long: Large ribosomal subunit protein uL4 (215 aa).

The tract at residues Thr46–Arg72 is disordered. The segment covering Ser56–Ala71 has biased composition (gly residues).

This sequence belongs to the universal ribosomal protein uL4 family. In terms of assembly, part of the 50S ribosomal subunit.

One of the primary rRNA binding proteins, this protein initially binds near the 5'-end of the 23S rRNA. It is important during the early stages of 50S assembly. It makes multiple contacts with different domains of the 23S rRNA in the assembled 50S subunit and ribosome. Its function is as follows. Forms part of the polypeptide exit tunnel. This is Large ribosomal subunit protein uL4 from Helicobacter pylori (strain G27).